Reading from the N-terminus, the 234-residue chain is MKKTFFIADLHLSENRPHLTELFVQFMQTQALQAEKLYILGDLFDFWIGDDEQSALIETVQQQILQLSQKGIPCYFIHGNRDFLVGRHFANSCGMELLPTYQIVNLYGKKVLICHGDTLCTDDLAYQQYRKKVQQKWLQWLFLHLPLKVRLKIAEKIRQKSKTDKTHKSIEIMDVNKDFVEQIMQQFQVNILIHGHTHKQNIHQNPPHFTRIVLGDWGATASVLEVSANGFQFI.

D9, H11, D42, N80, and H115 together coordinate Mn(2+). 80–81 (NR) lines the substrate pocket. 5 residues coordinate substrate: D123, S161, K165, K168, and H196. Mn(2+)-binding residues include H196 and H198.

The protein belongs to the LpxH family. The cofactor is Mn(2+).

It localises to the cell inner membrane. It carries out the reaction UDP-2-N,3-O-bis[(3R)-3-hydroxytetradecanoyl]-alpha-D-glucosamine + H2O = 2-N,3-O-bis[(3R)-3-hydroxytetradecanoyl]-alpha-D-glucosaminyl 1-phosphate + UMP + 2 H(+). It functions in the pathway glycolipid biosynthesis; lipid IV(A) biosynthesis; lipid IV(A) from (3R)-3-hydroxytetradecanoyl-[acyl-carrier-protein] and UDP-N-acetyl-alpha-D-glucosamine: step 4/6. Functionally, hydrolyzes the pyrophosphate bond of UDP-2,3-diacylglucosamine to yield 2,3-diacylglucosamine 1-phosphate (lipid X) and UMP by catalyzing the attack of water at the alpha-P atom. Involved in the biosynthesis of lipid A, a phosphorylated glycolipid that anchors the lipopolysaccharide to the outer membrane of the cell. The protein is UDP-2,3-diacylglucosamine hydrolase of Histophilus somni (strain 129Pt) (Haemophilus somnus).